A 227-amino-acid chain; its full sequence is uncharacterized protein (227 aa).

Positions 52-100 (NKRAKLYRERNKAKLKEKQHKWYHKGGGKEHKKLYDKINLEKSNMRDKN) form a coiled coil.

This sequence belongs to the mimivirus L246/L426 family.

This is an uncharacterized protein from Acanthamoeba polyphaga mimivirus (APMV).